The sequence spans 433 residues: Histidinol dehydrogenase 2 (433 aa).

Residues tyrosine 130, glutamine 192, and asparagine 215 each contribute to the NAD(+) site. The substrate site is built by serine 238, glutamine 260, and histidine 263. The Zn(2+) site is built by glutamine 260 and histidine 263. Active-site proton acceptor residues include glutamate 328 and histidine 329. Substrate-binding residues include histidine 329, aspartate 362, glutamate 416, and histidine 421. Aspartate 362 is a Zn(2+) binding site. Histidine 421 provides a ligand contact to Zn(2+).

Belongs to the histidinol dehydrogenase family. Requires Zn(2+) as cofactor.

It catalyses the reaction L-histidinol + 2 NAD(+) + H2O = L-histidine + 2 NADH + 3 H(+). Its pathway is amino-acid biosynthesis; L-histidine biosynthesis; L-histidine from 5-phospho-alpha-D-ribose 1-diphosphate: step 9/9. Functionally, catalyzes the sequential NAD-dependent oxidations of L-histidinol to L-histidinaldehyde and then to L-histidine. This chain is Histidinol dehydrogenase 2 (hisD2), found in Nostoc sp. (strain PCC 7120 / SAG 25.82 / UTEX 2576).